The sequence spans 76 residues: Tautomerase PptA (76 aa).

Pro-2 (proton acceptor; via imino nitrogen) is an active-site residue.

This sequence belongs to the 4-oxalocrotonate tautomerase family. PptA subfamily. Homodimer.

Its subcellular location is the cytoplasm. This Cronobacter sakazakii (strain ATCC BAA-894) (Enterobacter sakazakii) protein is Tautomerase PptA.